Reading from the N-terminus, the 322-residue chain is Eukaryotic translation initiation factor 3 subunit I (322 aa).

WD repeat units follow at residues 4–43 (GHERSITQIKYNREGDLLFSCSKDQKPNVWYSLNGERLGT), 46–85 (GHQGAVWCLDVDWETRKLITGAGDMTTKIWDVEYGTVIAS), 141–180 (MVESKITSMLWGPLDETIITGHDNGNIAIWDIRKGQKVVD), 184–223 (DHTAGINDMQLSKDGTMFVTASKDTTAKLFDSESLMCLKT), and 281–322 (GHFG…NIFE).

This sequence belongs to the eIF-3 subunit I family. As to quaternary structure, component of the eukaryotic translation initiation factor 3 (eIF-3) complex. The eIF-3 complex interacts with pix.

Its subcellular location is the cytoplasm. Component of the eukaryotic translation initiation factor 3 (eIF-3) complex, which is involved in protein synthesis of a specialized repertoire of mRNAs and, together with other initiation factors, stimulates binding of mRNA and methionyl-tRNAi to the 40S ribosome. The eIF-3 complex specifically targets and initiates translation of a subset of mRNAs involved in cell proliferation. This is Eukaryotic translation initiation factor 3 subunit I from Drosophila mojavensis (Fruit fly).